A 393-amino-acid polypeptide reads, in one-letter code: Riboflavin biosynthesis protein RibBA (393 aa).

The tract at residues 1 to 200 is DHBP synthase; it reads MQFDNIDSAL…IDDLIEYRKK (200 aa). D-ribulose 5-phosphate is bound by residues 27-28, D32, 139-143, and E163; these read RE and RNGHT. E28 contributes to the Mg(2+) binding site. Residue H142 participates in Mg(2+) binding. Positions 201-393 are GTP cyclohydrolase II; sequence LEPEIEFKAK…TKKIKMGHLI (193 aa). 249 to 253 provides a ligand contact to GTP; sequence RLHSA. C254, C265, and C267 together coordinate Zn(2+). GTP-binding positions include Q270, 291–293, and T313; that span reads EGR. The active-site Proton acceptor; for GTP cyclohydrolase activity is D325. The active-site Nucleophile; for GTP cyclohydrolase activity is R327. Residues S348 and K353 each contribute to the GTP site.

The protein in the N-terminal section; belongs to the DHBP synthase family. This sequence in the C-terminal section; belongs to the GTP cyclohydrolase II family. The cofactor is Mg(2+). Mn(2+) is required as a cofactor. Zn(2+) serves as cofactor.

The enzyme catalyses D-ribulose 5-phosphate = (2S)-2-hydroxy-3-oxobutyl phosphate + formate + H(+). It catalyses the reaction GTP + 4 H2O = 2,5-diamino-6-hydroxy-4-(5-phosphoribosylamino)-pyrimidine + formate + 2 phosphate + 3 H(+). Its pathway is cofactor biosynthesis; riboflavin biosynthesis; 2-hydroxy-3-oxobutyl phosphate from D-ribulose 5-phosphate: step 1/1. It participates in cofactor biosynthesis; riboflavin biosynthesis; 5-amino-6-(D-ribitylamino)uracil from GTP: step 1/4. Catalyzes the conversion of D-ribulose 5-phosphate to formate and 3,4-dihydroxy-2-butanone 4-phosphate. In terms of biological role, catalyzes the conversion of GTP to 2,5-diamino-6-ribosylamino-4(3H)-pyrimidinone 5'-phosphate (DARP), formate and pyrophosphate. This Staphylococcus aureus (strain MSSA476) protein is Riboflavin biosynthesis protein RibBA.